Reading from the N-terminus, the 956-residue chain is GAS2-like protein 2B (956 aa).

Positions 23-150 (YAMKEDLAEW…CLLELARRAS (128 aa)) constitute a Calponin-homology (CH) domain. The 73-residue stretch at 191–263 (CDFKNLDQMV…HYLDKHDPCH (73 aa)) folds into the GAR domain. 2 stretches are compositionally biased toward polar residues: residues 332–353 (SSSYSLDDNENSPSFKNSQTPP) and 381–390 (DPQQLGNPQS). Disordered stretches follow at residues 332–361 (SSSYSLDDNENSPSFKNSQTPPNDRRSMSI), 378–406 (DTQDPQQLGNPQSGHYRHHHSTSSLASQL), 853–885 (RPKIRPRRDNRPEKKPSRIPTPVSYRQVPSRNN), and 914–956 (VNSE…ESWV). The span at 859–868 (RRDNRPEKKP) shows a compositional bias: basic and acidic residues.

It belongs to the GAS2 family.

The protein resides in the cytoplasm. The protein localises to the cytoskeleton. Its subcellular location is the cilium basal body. Together with gas2l2.L, regulates ciliary orientation and performance. The protein is GAS2-like protein 2B of Xenopus laevis (African clawed frog).